Consider the following 229-residue polypeptide: Cytochrome c oxidase subunit 2 (229 aa).

Topologically, residues 1–14 (MANPTHLGFQDAMS) are mitochondrial intermembrane. A helical membrane pass occupies residues 15 to 45 (PLMEELLYFHDHTLMILFLISSLVFYMIFAL). Topologically, residues 46–59 (LFPKLYYPNTSDVQ) are mitochondrial matrix. Residues 60–87 (EVEVIWTVLPAIVLISIALPSLRTLYLM) traverse the membrane as a helical segment. Topologically, residues 88–229 (DETNNPCLTI…QLWLEDSILS (142 aa)) are mitochondrial intermembrane. Positions 161, 196, 198, 200, 204, and 207 each coordinate Cu cation. Glu-198 contacts Mg(2+).

It belongs to the cytochrome c oxidase subunit 2 family. In terms of assembly, component of the cytochrome c oxidase (complex IV, CIV), a multisubunit enzyme composed of 14 subunits. The complex is composed of a catalytic core of 3 subunits MT-CO1, MT-CO2 and MT-CO3, encoded in the mitochondrial DNA, and 11 supernumerary subunits COX4I, COX5A, COX5B, COX6A, COX6B, COX6C, COX7A, COX7B, COX7C, COX8 and NDUFA4, which are encoded in the nuclear genome. The complex exists as a monomer or a dimer and forms supercomplexes (SCs) in the inner mitochondrial membrane with NADH-ubiquinone oxidoreductase (complex I, CI) and ubiquinol-cytochrome c oxidoreductase (cytochrome b-c1 complex, complex III, CIII), resulting in different assemblies (supercomplex SCI(1)III(2)IV(1) and megacomplex MCI(2)III(2)IV(2)). Found in a complex with TMEM177, COA6, COX18, COX20, SCO1 and SCO2. Interacts with TMEM177 in a COX20-dependent manner. Interacts with COX20. Interacts with COX16. Requires Cu cation as cofactor.

The protein resides in the mitochondrion inner membrane. It carries out the reaction 4 Fe(II)-[cytochrome c] + O2 + 8 H(+)(in) = 4 Fe(III)-[cytochrome c] + 2 H2O + 4 H(+)(out). Component of the cytochrome c oxidase, the last enzyme in the mitochondrial electron transport chain which drives oxidative phosphorylation. The respiratory chain contains 3 multisubunit complexes succinate dehydrogenase (complex II, CII), ubiquinol-cytochrome c oxidoreductase (cytochrome b-c1 complex, complex III, CIII) and cytochrome c oxidase (complex IV, CIV), that cooperate to transfer electrons derived from NADH and succinate to molecular oxygen, creating an electrochemical gradient over the inner membrane that drives transmembrane transport and the ATP synthase. Cytochrome c oxidase is the component of the respiratory chain that catalyzes the reduction of oxygen to water. Electrons originating from reduced cytochrome c in the intermembrane space (IMS) are transferred via the dinuclear copper A center (CU(A)) of subunit 2 and heme A of subunit 1 to the active site in subunit 1, a binuclear center (BNC) formed by heme A3 and copper B (CU(B)). The BNC reduces molecular oxygen to 2 water molecules using 4 electrons from cytochrome c in the IMS and 4 protons from the mitochondrial matrix. This chain is Cytochrome c oxidase subunit 2 (MT-CO2), found in Alligator mississippiensis (American alligator).